The sequence spans 483 residues: MTKMDIRGAVDAAVPTNIIAAKAAEVRANKVNWQSYLQGQMISAEDCEFIQRFEMKRSSEDKQEMLQTEGSQCAKTFINLMTHISKEQTVQYILTMVDDMLQENHQRVSIFFDYAKRSKSTAWPYFLPMLNRQDPFTVHMAARIIAKLAAWGKELMEGSDLNYYFNWIKTQLSSQKLRGSGVAVETGTISSSDSSQYVQCVAGCLQLMLRVNEYRFAWVEADGVNCIMGVLSNKCGFQLQYQMIFSIWLLAFSPQMCEHLRRYNIIPVLSDILQESVKEKVTRIILAAFRNFLEKSTERETRQEYALAMIQCKVLKQLENLEQQKYDDEDISEDIKFLLEKLGESVQDLSSFDEYSSELKSGRLEWSPVHKSEKFWRENAVRLNEKNYELLKILTKLLEVSDDPQVLAVAAHDVGEYVRHYPRGKRVIEQLGGKQLVMNHMHHEDQQVRYNALLAVQKLMVHNWEYLGKQLQSEQPQTAAARS.

Ser-59 and Ser-483 each carry phosphoserine.

It belongs to the V-ATPase H subunit family. In terms of assembly, V-ATPase is a heteromultimeric enzyme made up of two complexes: the ATP-hydrolytic V1 complex and the proton translocation V0 complex. The V1 complex consists of three catalytic AB heterodimers that form a heterohexamer, three peripheral stalks each consisting of EG heterodimers, one central rotor including subunits D and F, and the regulatory subunits C and H. The proton translocation complex V0 consists of the proton transport subunit a, a ring of proteolipid subunits c9c'', rotary subunit d, subunits e and f, and the accessory subunits ATP6AP1/Ac45 and ATP6AP2/PRR. Interacts with AP2M1.

The protein resides in the cytoplasmic vesicle. The protein localises to the clathrin-coated vesicle membrane. Functionally, subunit of the V1 complex of vacuolar(H+)-ATPase (V-ATPase), a multisubunit enzyme composed of a peripheral complex (V1) that hydrolyzes ATP and a membrane integral complex (V0) that translocates protons. V-ATPase is responsible for acidifying and maintaining the pH of intracellular compartments and in some cell types, is targeted to the plasma membrane, where it is responsible for acidifying the extracellular environment. Subunit H is essential for V-ATPase activity, but not for the assembly of the complex. Involved in the endocytosis mediated by clathrin-coated pits, required for the formation of endosomes. The sequence is that of V-type proton ATPase subunit H (Atp6v1h) from Mus musculus (Mouse).